Here is a 217-residue protein sequence, read N- to C-terminus: Probable GTP-binding protein EngB (217 aa).

In terms of domain architecture, EngB-type G spans 29–213 (GPLEVAFAGR…RQAIGETVGV (185 aa)). GTP contacts are provided by residues 37-44 (GRSNVGKS), 64-68 (GRTQE), 91-94 (DMPG), 158-161 (TKTD), and 192-194 (TSS). Ser-44 and Thr-66 together coordinate Mg(2+).

This sequence belongs to the TRAFAC class TrmE-Era-EngA-EngB-Septin-like GTPase superfamily. EngB GTPase family. Mg(2+) serves as cofactor.

Necessary for normal cell division and for the maintenance of normal septation. This is Probable GTP-binding protein EngB from Rhizobium leguminosarum bv. trifolii (strain WSM2304).